The primary structure comprises 815 residues: Leucine--tRNA ligase (815 aa).

The 'HIGH' region motif lies at 42-52 (PYPSGRLHMGH). The short motif at 574–578 (KMSKS) is the 'KMSKS' region element. Lysine 577 is a binding site for ATP.

It belongs to the class-I aminoacyl-tRNA synthetase family.

Its subcellular location is the cytoplasm. It carries out the reaction tRNA(Leu) + L-leucine + ATP = L-leucyl-tRNA(Leu) + AMP + diphosphate. In Marinomonas sp. (strain MWYL1), this protein is Leucine--tRNA ligase.